The chain runs to 401 residues: uncharacterized protein (401 aa).

Belongs to the serpin family.

In terms of biological role, may act as an inhibitor for a host chymotrypsin-like protease. This is an uncharacterized protein from Acanthamoeba polyphaga mimivirus (APMV).